A 185-amino-acid chain; its full sequence is Ribosome-recycling factor (185 aa).

Belongs to the RRF family.

Its subcellular location is the cytoplasm. Responsible for the release of ribosomes from messenger RNA at the termination of protein biosynthesis. May increase the efficiency of translation by recycling ribosomes from one round of translation to another. The sequence is that of Ribosome-recycling factor from Shewanella amazonensis (strain ATCC BAA-1098 / SB2B).